The sequence spans 74 residues: Neuropeptide-like protein 33 (74 aa).

A signal peptide spans 1–21 (MISTSLLLVVLLFAILAIVDA). Y72 carries the post-translational modification Tyrosine amide.

This sequence belongs to the YARP (YGGW-amide related peptide) family. In terms of tissue distribution, expressed in hypoderm.

The protein resides in the secreted. Functionally, may have antifungic activity against D.coniospora. The polypeptide is Neuropeptide-like protein 33 (nlp-33) (Caenorhabditis elegans).